A 603-amino-acid chain; its full sequence is Baeyer-Villiger monooxygenase (603 aa).

FAD is bound by residues Glu94, 102-105, Asp114, Tyr120, and Val164; that span reads TWYW. Residue 112-114 participates in NADP(+) binding; it reads HCD. Residues 248 to 254, 271 to 272, and 386 to 387 contribute to the NADP(+) site; these read TGATGVQ, RT, and KR.

The protein belongs to the FAD-binding monooxygenase family. Requires FAD as cofactor.

Functionally, catalyzes a Baeyer-Villiger oxidation reaction, i.e. the insertion of an oxygen atom into a carbon-carbon bond adjacent to a carbonyl, which converts ketones to esters or lactones using NADPH and/or NADH as an electron donor. Thus, can convert bicyclo[3.2.0]hept-2-en-6-one into the oxidative lactone products 2-oxabicyclo[3.3.0]oct-6-en-3-one and 3-oxabicyclo[3.3.0]oct-6-en-2-one. Is also able to catalyze the sulfoxidation of methyl phenyl sulfide (thioanisole). In Streptomyces coelicolor (strain ATCC BAA-471 / A3(2) / M145), this protein is Baeyer-Villiger monooxygenase.